We begin with the raw amino-acid sequence, 536 residues long: Ribulokinase (536 aa).

Belongs to the ribulokinase family.

It carries out the reaction D-ribulose + ATP = D-ribulose 5-phosphate + ADP + H(+). It catalyses the reaction L-ribulose + ATP = L-ribulose 5-phosphate + ADP + H(+). Its pathway is carbohydrate degradation; L-arabinose degradation via L-ribulose; D-xylulose 5-phosphate from L-arabinose (bacterial route): step 2/3. This Staphylococcus epidermidis (strain ATCC 12228 / FDA PCI 1200) protein is Ribulokinase.